The following is a 116-amino-acid chain: S-adenosylmethionine decarboxylase proenzyme (116 aa).

The active-site Schiff-base intermediate with substrate; via pyruvic acid is the Ser63. Ser63 carries the pyruvic acid (Ser); by autocatalysis modification. The active-site Proton acceptor; for processing activity is the His68. Cys83 serves as the catalytic Proton donor; for catalytic activity.

It belongs to the prokaryotic AdoMetDC family. Type 1 subfamily. As to quaternary structure, heterotetramer of two alpha and two beta chains arranged as a dimer of alpha/beta heterodimers. It depends on pyruvate as a cofactor. In terms of processing, is synthesized initially as an inactive proenzyme. Formation of the active enzyme involves a self-maturation process in which the active site pyruvoyl group is generated from an internal serine residue via an autocatalytic post-translational modification. Two non-identical subunits are generated from the proenzyme in this reaction, and the pyruvate is formed at the N-terminus of the alpha chain, which is derived from the carboxyl end of the proenzyme. The post-translation cleavage follows an unusual pathway, termed non-hydrolytic serinolysis, in which the side chain hydroxyl group of the serine supplies its oxygen atom to form the C-terminus of the beta chain, while the remainder of the serine residue undergoes an oxidative deamination to produce ammonia and the pyruvoyl group blocking the N-terminus of the alpha chain.

It carries out the reaction S-adenosyl-L-methionine + H(+) = S-adenosyl 3-(methylsulfanyl)propylamine + CO2. It functions in the pathway amine and polyamine biosynthesis; S-adenosylmethioninamine biosynthesis; S-adenosylmethioninamine from S-adenosyl-L-methionine: step 1/1. Catalyzes the decarboxylation of S-adenosylmethionine to S-adenosylmethioninamine (dcAdoMet), the propylamine donor required for the synthesis of the polyamines spermine and spermidine from the diamine putrescine. In Clostridium botulinum (strain Okra / Type B1), this protein is S-adenosylmethionine decarboxylase proenzyme.